Here is a 122-residue protein sequence, read N- to C-terminus: Large ribosomal subunit protein uL14 (122 aa).

It belongs to the universal ribosomal protein uL14 family. Part of the 50S ribosomal subunit. Forms a cluster with proteins L3 and L19. In the 70S ribosome, L14 and L19 interact and together make contacts with the 16S rRNA in bridges B5 and B8.

Its function is as follows. Binds to 23S rRNA. Forms part of two intersubunit bridges in the 70S ribosome. This Lacticaseibacillus casei (strain BL23) (Lactobacillus casei) protein is Large ribosomal subunit protein uL14.